The sequence spans 256 residues: Protein FixA (256 aa).

Belongs to the ETF beta-subunit/FixA family. In terms of assembly, heterodimer of FixA and FixB.

It participates in amine and polyamine metabolism; carnitine metabolism. Required for anaerobic carnitine reduction. May bring reductant to CaiA. In Shigella flexneri serotype 5b (strain 8401), this protein is Protein FixA.